The following is a 419-amino-acid chain: 2-amino-3-ketobutyrate coenzyme A ligase, mitochondrial (419 aa).

A mitochondrion-targeting transit peptide spans 1-21; the sequence is MWAGRVLHAALSRAPRESRAQ. Lysine 45 bears the N6-acetyllysine; alternate mark. Lysine 45 is subject to N6-succinyllysine; alternate. 134 to 135 is a binding site for pyridoxal 5'-phosphate; the sequence is CF. Histidine 159 serves as a coordination point for substrate. Lysine 187 bears the N6-acetyllysine; alternate mark. At lysine 187 the chain carries N6-succinyllysine; alternate. Pyridoxal 5'-phosphate contacts are provided by residues serine 206, 231–234, 262–265, and 295–296; these read DESH, TLGK, and SN. Lysine 265 is subject to N6-(pyridoxal phosphate)lysine. 2 positions are modified to N6-succinyllysine: lysine 326 and lysine 368. At lysine 383 the chain carries N6-acetyllysine; alternate. Lysine 383 carries the N6-succinyllysine; alternate modification. Arginine 389 contributes to the substrate binding site.

It belongs to the class-II pyridoxal-phosphate-dependent aminotransferase family. Requires pyridoxal 5'-phosphate as cofactor.

It localises to the mitochondrion. The protein localises to the nucleus. It carries out the reaction glycine + acetyl-CoA = (2S)-2-amino-3-oxobutanoate + CoA. It participates in amino-acid degradation; L-threonine degradation via oxydo-reductase pathway; glycine from L-threonine: step 2/2. Its function is as follows. Pyridoxal phosphate (PLP) dependent enzyme, which catalyzes the cleavage of 2-amino-3-oxobutanoate to glycine and acetyl-CoA. Catalyzes the second reaction step on the main metabolic degradation pathway for L-threonine. The chain is 2-amino-3-ketobutyrate coenzyme A ligase, mitochondrial (GCAT) from Bos taurus (Bovine).